A 377-amino-acid polypeptide reads, in one-letter code: MEVAIPKDLQQEASLAKKRYMDLCRQGQIFDARNRIIGGDTQAWDVQVRNQKIKEVTEKARDETFAAEMRHNDKVMCIMHDRELRHRKQLCRAINDFQQRFQKPETRREFDLSDPLALKKELPARVSDNDMRNTISGMQKFMGEDLNFQERKRIQKEQNREWSLQQHGEWERAQAEHKLAEHLHTQTELKFDEAARDLQRLEITTRKAVCAAVKEFNKKQVVELAERKRQVKQQEQEDNMSEITNLLHGDLLSENPQQAASNFGPRHVMLDRWKGMNREQLEEIWSTWKQQIHEKLRLQEEERQHNMDWDLRRTRKAHASLLQERQQQRLLREQRRALDCSNLSLAKQQYLQKRQLDAAPSSQPTEDYFSQFNTRSR.

A coiled-coil region spans residues 188–238 (ELKFDEAARDLQRLEITTRKAVCAAVKEFNKKQVVELAERKRQVKQQEQED). The disordered stretch occupies residues 355-377 (QLDAAPSSQPTEDYFSQFNTRSR). Over residues 360–377 (PSSQPTEDYFSQFNTRSR) the composition is skewed to polar residues.

It belongs to the RIB43A family. Microtubule inner protein component of sperm flagellar doublet microtubules.

It is found in the cytoplasm. It localises to the cytoskeleton. Its subcellular location is the cilium axoneme. The protein localises to the flagellum axoneme. In terms of biological role, microtubule inner protein (MIP) part of the dynein-decorated doublet microtubules (DMTs) in cilia axoneme, which is required for motile cilia beating. In Rattus norvegicus (Rat), this protein is RIB43A-like with coiled-coils protein 2.